A 165-amino-acid polypeptide reads, in one-letter code: MNREKLMKMANTVRTGGKGTVRRKKKAVHKTTTTDDKRLQSTLKRVGVNSIPAIEEVNIFKDDVVIQFINPKVQASIAANTWVVSGTPQTKKLQDILPQIISQLGPDNLDNLKKLAEQFQKQAPGAGDVPATIQEEDDDDDVPDLVVGETFETPATEEAPKAAAS.

In terms of domain architecture, NAC-A/B spans 33–97 (TTDDKRLQST…PQTKKLQDIL (65 aa)). Residues 120 to 165 (QKQAPGAGDVPATIQEEDDDDDVPDLVVGETFETPATEEAPKAAAS) are disordered. The span at 134-143 (QEEDDDDDVP) shows a compositional bias: acidic residues. Over residues 144 to 165 (DLVVGETFETPATEEAPKAAAS) the composition is skewed to low complexity.

Belongs to the NAC-beta family. As to quaternary structure, part of the nascent polypeptide-associated complex (NAC).

The sequence is that of Nascent polypeptide-associated complex subunit beta from Arabidopsis thaliana (Mouse-ear cress).